The chain runs to 226 residues: ATP-dependent dethiobiotin synthetase BioD (226 aa).

Asp12–Val17 is a binding site for ATP. Residue Thr16 coordinates Mg(2+). Lys39 is an active-site residue. Ser43 contacts substrate. ATP-binding positions include Asp47, Glu108–Gly111, Asn168–Cys169, Pro200–Leu202, and Asn207. Mg(2+) contacts are provided by Asp47 and Glu108.

This sequence belongs to the dethiobiotin synthetase family. As to quaternary structure, homodimer. Mg(2+) is required as a cofactor.

The protein localises to the cytoplasm. It carries out the reaction (7R,8S)-7,8-diammoniononanoate + CO2 + ATP = (4R,5S)-dethiobiotin + ADP + phosphate + 3 H(+). The enzyme catalyses (7R,8S)-8-amino-7-(carboxyamino)nonanoate + ATP = (4R,5S)-dethiobiotin + ADP + phosphate + H(+). It participates in cofactor biosynthesis; biotin biosynthesis; biotin from 7,8-diaminononanoate: step 1/2. Catalyzes a mechanistically unusual reaction, the ATP-dependent insertion of CO2 between the N7 and N8 nitrogen atoms of 7,8-diaminopelargonic acid (DAPA, also called 7,8-diammoniononanoate) to form a ureido ring. This cyanobacterium does not encode bioA (which catalyzes the formation of the precursor for this reaction in the cannonical pathway), instead it encodes bioU, which replaces bioA and also performs the first half of the cannonical BioD reaction. Thus in this organism BioD has a different substrate. This chain is ATP-dependent dethiobiotin synthetase BioD, found in Cyanothece sp. (strain PCC 7425 / ATCC 29141).